The chain runs to 971 residues: Protein ALWAYS EARLY 1 (971 aa).

Residues 1–11 are compositionally biased toward basic residues; sequence MAPTRKSKSVN. Disordered regions lie at residues 1 to 40, 117 to 137, 197 to 260, 326 to 371, and 421 to 507; these read MAPT…LADK, SESE…LKRK, IEDF…MFEN, GLLE…GLED, and PKES…KISL. Residues 40–98 form the SANT domain; that stretch reads KLGPQWTKRELVRFYDAYRKYVGDWKKVAAAVRNNRSVEMVETLFCMNRAYLSLPEGTA. Basic and acidic residues-rich tracts occupy residues 209–219, 332–350, and 424–440; these read KQLDADDDASR, SSPH…KKSN, and STQD…EVDS. Polar residues predominate over residues 450 to 470; it reads SSQGPAKQLKTAKTTVESSSA.

In terms of tissue distribution, expressed ubiquitously in vegetative and reproductive tissues.

It localises to the nucleus. This is Protein ALWAYS EARLY 1 (ALY1) from Arabidopsis thaliana (Mouse-ear cress).